A 191-amino-acid chain; its full sequence is MYSGQNKIHKDKGVAPTEFEEQVTQALFDLENTNQELKSELKDLYINQAVQMDISGNRKAVVIYVPFRLRKAFRKIHLRLVRELEKKFSGKDVIFVATRRIMRPPKKGSAVQRPRNRTLTSVHEAMLEDVAYPAEIVGKRTRYRLDGTKIMKVFLDSKLKNDTEYKLETMVGVYRKLTGKDVVFEYPVIEA.

The residue at position 1 (methionine 1) is an N-acetylmethionine. The stretch at 17 to 50 (TEFEEQVTQALFDLENTNQELKSELKDLYINQAV) forms a coiled coil.

It belongs to the eukaryotic ribosomal protein eS7 family.

The sequence is that of Small ribosomal subunit protein eS7y (RPS7B) from Arabidopsis thaliana (Mouse-ear cress).